Reading from the N-terminus, the 452-residue chain is Flavin-containing monooxygenase FMO GS-OX-like 4 (452 aa).

Residue Gly17–Gly22 participates in FAD binding. Gly217 to Ala222 serves as a coordination point for NADP(+).

This sequence belongs to the FMO family. Requires FAD as cofactor.

Functionally, catalyzes the conversion of methylthioalkyl glucosinolates of any chain length into methylsulfinylalkyl glucosinolates. The chain is Flavin-containing monooxygenase FMO GS-OX-like 4 from Arabidopsis thaliana (Mouse-ear cress).